A 354-amino-acid polypeptide reads, in one-letter code: Probable disease resistance protein At5g45490 (354 aa).

Positions 33–53 (AKGNLEKKRDDNEEEERLKTE) form a coiled coil. One can recognise an NB-ARC domain in the interval 45–122 (EEEERLKTES…VYAPRVWVSM (78 aa)). Position 91–98 (91–98 (GEYGVGKT)) interacts with ATP. The segment at 328 to 354 (DDEVGPVGSTHGQTDSSNRQPANQASS) is disordered. A compositionally biased stretch (polar residues) spans 337 to 354 (THGQTDSSNRQPANQASS).

In terms of biological role, possible disease resistance protein. The protein is Probable disease resistance protein At5g45490 of Arabidopsis thaliana (Mouse-ear cress).